The primary structure comprises 510 residues: Cytochrome P450 705A20 (510 aa).

The helical transmembrane segment at 7–27 (QHCFSFILLCFFSLLCYSLLF) threads the bilayer.

This sequence belongs to the cytochrome P450 family. Heme is required as a cofactor.

The protein resides in the membrane. The protein is Cytochrome P450 705A20 (CYP705A20) of Arabidopsis thaliana (Mouse-ear cress).